The sequence spans 289 residues: Rhodopsin (289 aa).

The Extracellular segment spans residues Tyr1–Ala7. A helical transmembrane segment spans residues Tyr8 to Val32. The Cytoplasmic portion of the chain corresponds to Thr33 to Asn44. A helical membrane pass occupies residues Tyr45–Tyr67. Residues Thr68–Cys81 are Extracellular-facing. An intrachain disulfide couples Cys81 to Cys158. Residues Asn82–Ile104 traverse the membrane as a helical segment. The 'Ionic lock' involved in activated form stabilization signature appears at Glu105–Trp107. Residues Glu105–His123 are Cytoplasmic-facing. Residues Ala124 to Val144 traverse the membrane as a helical segment. Over Gly145–Ser173 the chain is Extracellular. Asn171 carries N-linked (GlcNAc...) asparagine glycosylation. A helical transmembrane segment spans residues Phe174–Gly195. Topologically, residues Arg196–Arg223 are cytoplasmic. A helical transmembrane segment spans residues Met224–Trp245. Over Ile246–Ile257 the chain is Extracellular. The helical transmembrane segment at Phe258–Cys279 threads the bilayer. Residue Lys267 is modified to N6-(retinylidene)lysine. Residues Met280 to Ile289 lie on the Cytoplasmic side of the membrane.

This sequence belongs to the G-protein coupled receptor 1 family. Opsin subfamily. Post-translationally, phosphorylated on some or all of the serine and threonine residues present in the C-terminal region. Contains one covalently linked retinal chromophore.

Its subcellular location is the membrane. The protein resides in the cell projection. The protein localises to the cilium. It localises to the photoreceptor outer segment. Photoreceptor required for image-forming vision at low light intensity. While most salt water fish species use retinal as chromophore, most freshwater fish use 3-dehydroretinal, or a mixture of retinal and 3-dehydroretinal. Light-induced isomerization of 11-cis to all-trans retinal triggers a conformational change that activates signaling via G-proteins. Subsequent receptor phosphorylation mediates displacement of the bound G-protein alpha subunit by arrestin and terminates signaling. This chain is Rhodopsin (rho), found in Abyssocottus korotneffi (Baikalian deep-water sculpin).